Consider the following 797-residue polypeptide: MELDKDIQTTQKGFHCNLCHVNIPNRPSLEDHVKGKKHLHLLRLRAQRKTQEENSVFVSGFKADTSQTELKEYFQQFGLVTDVIMDKQKGVYAIVEFSESQDVQTTLAQPQHQLNGLKLRVKPREKKEFKLASRGKQDCKNTLISLDKLNFELCKAMSVNEQIQKVVESLELKDNEKKVRDLLVQLLQEVFTEFFPDCQIVPFGSSVNTFGLHSCDLDLFLDLENTKVFQARAKSSEQTGENQSEDCRSEDSILSDIDLSTASPAEILELVAVILRKCVPGVHKVQALSTARLPVVKFSHKELNLQGDITINNRLAVRNTKFLQLCSGIDSRLRPLVYTIRLWAKQKQLAGNLSGPGPLLNNYALTLLVIFFLQNRDPPVLPSVNQLKNMACEEEECAIEEWDCTFPSQPFSVPPSKNTEDLCTLLFGFFTFYSKFDFPASVVSLRDGHVLPITDFLKSDMEALKTADASSPKPKRSSAPRLGPMNVLDPFELNHNVAGNLNERTQKNFKRECCEAEKYCRSLQYQRKSAKGKSWGLVRLFAPQSEAAASSQPRAEKVLEVSVPFKPASLPESLRAQLASAGKDFRGLWFAEVCSAVQKVFNEILQCSPTEETQSLDKTDKSGSEMEVNNNRSLEDTNIQVKGEAGKKRPLSVEEGPSTFTITQAKRQRLDVDLEHPEPLHWTWTQRSRVWAGRRKVRRDLLKTSDEASKPEGGCVDMESRVTQSIVEKEEKLHDALEFKVDAEVVGGNESTKVVLRFHPSIDTAGVFQDFFHFLESFLPKMAETIMGRAEDITDMS.

The Matrin-type zinc finger occupies Phe14–Leu44. The 73-residue stretch at Asn54–Lys126 folds into the RRM domain. Ser205 is an ATP binding site. The Mg(2+) site is built by Asp216 and Asp218. UTP-binding residues include Asp216, Asp218, Asn319, Arg341, Tyr363, and His495. Asn319 lines the ATP pocket. In terms of domain architecture, PAP-associated spans Asp421–His495. The KA1; binds the bulging loops of U6 snRNA but is dispensable for terminal uridylyltransferase activity stretch occupies residues Gln544–Met787. The tract at residues Glu611 to Thr659 is disordered. Positions Ser615–Ser624 are enriched in basic and acidic residues. Over residues Glu627–Gln640 the composition is skewed to polar residues.

It belongs to the DNA polymerase type-B-like family. In terms of assembly, associates with the cleavage and polyadenylation specificity factor (CPSF) complex. It depends on Mg(2+) as a cofactor. The cofactor is Mn(2+).

The protein localises to the nucleus. The protein resides in the nucleolus. Its subcellular location is the nucleus speckle. The enzyme catalyses RNA(n) + UTP = RNA(n)-3'-uridine ribonucleotide + diphosphate. It catalyses the reaction RNA(n) + ATP = RNA(n)-3'-adenine ribonucleotide + diphosphate. Its function is as follows. Poly(A) polymerase that creates the 3'-poly(A) tail of specific pre-mRNAs. In addition to polyadenylation, it is also required for the 3'-end cleavage of pre-mRNAs: binds to the 3'UTR of targeted pre-mRNAs and promotes the recruitment and assembly of the CPSF complex on the 3'UTR of pre-mRNAs. In addition to adenylyltransferase activity, also has uridylyltransferase activity. However, the ATP ratio is higher than UTP in cells, suggesting that it functions primarily as a poly(A) polymerase. The polypeptide is Speckle targeted PIP5K1A-regulated poly(A) polymerase (tut1) (Danio rerio (Zebrafish)).